The primary structure comprises 390 residues: uncharacterized protein (390 aa).

This is an uncharacterized protein from Archaeoglobus fulgidus (strain ATCC 49558 / DSM 4304 / JCM 9628 / NBRC 100126 / VC-16).